The chain runs to 550 residues: Glucose-6-phosphate isomerase (550 aa).

Glu-355 functions as the Proton donor in the catalytic mechanism. Catalysis depends on residues His-386 and Lys-512.

Belongs to the GPI family.

The protein resides in the cytoplasm. The enzyme catalyses alpha-D-glucose 6-phosphate = beta-D-fructose 6-phosphate. It participates in carbohydrate biosynthesis; gluconeogenesis. It functions in the pathway carbohydrate degradation; glycolysis; D-glyceraldehyde 3-phosphate and glycerone phosphate from D-glucose: step 2/4. In terms of biological role, catalyzes the reversible isomerization of glucose-6-phosphate to fructose-6-phosphate. In Rhodococcus opacus (strain B4), this protein is Glucose-6-phosphate isomerase.